A 297-amino-acid chain; its full sequence is Aspartate carbamoyltransferase catalytic subunit (297 aa).

Residues arginine 48 and threonine 49 each contribute to the carbamoyl phosphate site. Lysine 76 provides a ligand contact to L-aspartate. Residues arginine 98, histidine 129, and glutamine 132 each contribute to the carbamoyl phosphate site. Positions 162 and 214 each coordinate L-aspartate. Alanine 257 and proline 258 together coordinate carbamoyl phosphate.

It belongs to the aspartate/ornithine carbamoyltransferase superfamily. ATCase family. As to quaternary structure, heterododecamer (2C3:3R2) of six catalytic PyrB chains organized as two trimers (C3), and six regulatory PyrI chains organized as three dimers (R2).

It carries out the reaction carbamoyl phosphate + L-aspartate = N-carbamoyl-L-aspartate + phosphate + H(+). It participates in pyrimidine metabolism; UMP biosynthesis via de novo pathway; (S)-dihydroorotate from bicarbonate: step 2/3. Functionally, catalyzes the condensation of carbamoyl phosphate and aspartate to form carbamoyl aspartate and inorganic phosphate, the committed step in the de novo pyrimidine nucleotide biosynthesis pathway. The polypeptide is Aspartate carbamoyltransferase catalytic subunit (Leuconostoc mesenteroides subsp. mesenteroides (strain ATCC 8293 / DSM 20343 / BCRC 11652 / CCM 1803 / JCM 6124 / NCDO 523 / NBRC 100496 / NCIMB 8023 / NCTC 12954 / NRRL B-1118 / 37Y)).